The chain runs to 211 residues: Small ribosomal subunit protein uS3 (211 aa).

Positions 38-106 constitute a KH type-2 domain; the sequence is LRSFVKKTFH…EVELHIVEVK (69 aa).

The protein belongs to the universal ribosomal protein uS3 family. Part of the 30S ribosomal subunit. Forms a tight complex with proteins S10 and S14.

Its function is as follows. Binds the lower part of the 30S subunit head. Binds mRNA in the 70S ribosome, positioning it for translation. The sequence is that of Small ribosomal subunit protein uS3 from Anaplasma phagocytophilum (strain HZ).